Consider the following 802-residue polypeptide: Protein enabled homolog (802 aa).

The WH1 domain occupies M1–L111. Over residues N143–S155 the composition is skewed to polar residues. The tract at residues N143–L166 is disordered. A Phosphoserine modification is found at S144. Residues P154 to A258 adopt a coiled-coil conformation. 7 tandem repeats follow at residues L175–R179, M180–R184, L185–R189, L190–R194, L195–R199, L200–Q204, and L205–R209. The interval L175 to R209 is 7 X 5 AA tandem repeats of [LM]-E-[QR]-[EQ]-[QR]. Residues Q245–M254 show a composition bias toward basic and acidic residues. Disordered stretches follow at residues Q245–A287 and A341–T622. The residue at position 255 (S255) is a Phosphoserine; by PKA. The segment covering S255–P278 has biased composition (low complexity). Residues N348 to S361 are compositionally biased toward polar residues. S383 carries the post-translational modification Phosphoserine. The segment covering I386–V410 has biased composition (low complexity). Pro residues predominate over residues V431–P464. Positions S485 to A505 are enriched in low complexity. Residues A525–P535 are compositionally biased toward polar residues. Residues P542–S553 show a composition bias toward pro residues. Position 557 is a phosphotyrosine (Y557). Positions L561 to P605 are enriched in pro residues. The tract at residues G623 to S643 is EVH2 block A. The interval G623 to S799 is EVH2. Positions K632–K635 match the KLKR motif. 2 disordered regions span residues V639 to G675 and A691 to L764. Over residues R664–G675 the composition is skewed to gly residues. The EVH2 block B stretch occupies residues S674–A691. Over residues R731–Q760 the composition is skewed to polar residues. 2 positions are modified to phosphoserine: S738 and S740. Positions D765–S799 are EVH2 block C. A coiled-coil region spans residues D767 to S797.

Belongs to the Ena/VASP family. In terms of assembly, homotetramer. Interacts with APBB1IP, APBB1, PFN1 and ROBO4. Isoforms, containing the polyproline-rich regions with PPLP motifs, bind the WW domain of APBB1IP. Isoforms, containing the PPSY motif, bind, in vitro, to the WW2 and WW3 domains of NEDD4 and to the WW1 domain of YAP1. Binds the SH3 domain of BAIAP2-alpha but only after the autoinhibitory region of BAIAP2-alpha has been blocked by interaction with CDC42. Interacts, via the EVH1/WH1 domain, with the Pro-rich domains from VCL, ZYX and Listeria monocytogenes actA and with TES (via LIM domain). The TES LIM domain and the Pro-rich domains from VCL or ZYX compete for the same binding site. Interaction with ZYX is important for targeting ENAH to focal adhesions and enhances production of actin-rich structures at the apical surface of cells. Binds GPHN. Heterotrimer with TES and ACTL7A. Interacts with FAT1 (via EVH1 domains). Interacts, through the Pro-rich region, with the C-terminal SH3 domain of DNMPB. Interacts with PRPF40A. NTN1-induced PKA phosphorylation on Ser-255 directly parallels the formation of filopodial protrusions. Expressed in heart and testis, lower levels in lung, skeletal muscle, kidney, pancreas and brain. Isoform 5 is expressed exclusively in the brain. Isoform 2 is expressed predominantly in brain, testis, ovary and fat. In the brain, isoforms 2 and 5 are expressed at highest levels in the hippocampus, cortex and midbrain, and at lowest levels in the striatum and cerebellum. Isoform 6 is expressed in brain and spleen.

It localises to the cytoplasm. Its subcellular location is the cytoskeleton. The protein localises to the cell projection. It is found in the lamellipodium. The protein resides in the filopodium. It localises to the synapse. Its subcellular location is the cell junction. The protein localises to the focal adhesion. Ena/VASP proteins are actin-associated proteins involved in a range of processes dependent on cytoskeleton remodeling and cell polarity such as axon guidance and lamellipodial and filopodial dynamics in migrating cells. ENAH induces the formation of F-actin rich outgrowths in fibroblasts. Acts synergistically with BAIAP2-alpha and downstream of NTN1 to promote filipodia formation. This is Protein enabled homolog (Enah) from Mus musculus (Mouse).